We begin with the raw amino-acid sequence, 443 residues long: Tol-Pal system protein TolB (443 aa).

The N-terminal stretch at Met-1–Ala-31 is a signal peptide. Residues Glu-422–Gln-443 form a disordered region.

It belongs to the TolB family. The Tol-Pal system is composed of five core proteins: the inner membrane proteins TolA, TolQ and TolR, the periplasmic protein TolB and the outer membrane protein Pal. They form a network linking the inner and outer membranes and the peptidoglycan layer.

Its subcellular location is the periplasm. Functionally, part of the Tol-Pal system, which plays a role in outer membrane invagination during cell division and is important for maintaining outer membrane integrity. The chain is Tol-Pal system protein TolB from Bartonella henselae (strain ATCC 49882 / DSM 28221 / CCUG 30454 / Houston 1) (Rochalimaea henselae).